A 231-amino-acid chain; its full sequence is Small ribosomal subunit protein uS2 (231 aa).

Residues 1-23 form a disordered region; sequence MKVTNLSEKEERGGELTEAEKEE. Residues 7–23 are compositionally biased toward basic and acidic residues; that stretch reads SEKEERGGELTEAEKEE.

It belongs to the universal ribosomal protein uS2 family.

The polypeptide is Small ribosomal subunit protein uS2 (rps2) (Saccharolobus solfataricus (strain ATCC 35092 / DSM 1617 / JCM 11322 / P2) (Sulfolobus solfataricus)).